We begin with the raw amino-acid sequence, 217 residues long: Probable transaldolase (217 aa).

Residue Lys-83 is the Schiff-base intermediate with substrate of the active site.

It belongs to the transaldolase family. Type 3B subfamily.

The protein resides in the cytoplasm. The catalysed reaction is D-sedoheptulose 7-phosphate + D-glyceraldehyde 3-phosphate = D-erythrose 4-phosphate + beta-D-fructose 6-phosphate. It participates in carbohydrate degradation; pentose phosphate pathway; D-glyceraldehyde 3-phosphate and beta-D-fructose 6-phosphate from D-ribose 5-phosphate and D-xylulose 5-phosphate (non-oxidative stage): step 2/3. Its function is as follows. Transaldolase is important for the balance of metabolites in the pentose-phosphate pathway. The polypeptide is Probable transaldolase (Clostridium botulinum (strain Okra / Type B1)).